A 367-amino-acid polypeptide reads, in one-letter code: Anthranilate phosphoribosyltransferase (367 aa).

Residues 1-17 (MVLSSEASSAADHSAAA) show a composition bias toward low complexity. Residues 1–22 (MVLSSEASSAADHSAAAPIPTS) are disordered. 5-phospho-alpha-D-ribose 1-diphosphate is bound by residues Gly104, 107–108 (GD), Thr112, 114–117 (NLST), 132–140 (KHGNRAASS), and Gly144. Gly104 lines the anthranilate pocket. Ser116 provides a ligand contact to Mg(2+). Position 135 (Asn135) interacts with anthranilate. Residue Arg190 coordinates anthranilate. Residues Asp248 and Glu249 each coordinate Mg(2+).

The protein belongs to the anthranilate phosphoribosyltransferase family. In terms of assembly, homodimer. Requires Mg(2+) as cofactor.

It carries out the reaction N-(5-phospho-beta-D-ribosyl)anthranilate + diphosphate = 5-phospho-alpha-D-ribose 1-diphosphate + anthranilate. Its pathway is amino-acid biosynthesis; L-tryptophan biosynthesis; L-tryptophan from chorismate: step 2/5. Catalyzes the transfer of the phosphoribosyl group of 5-phosphorylribose-1-pyrophosphate (PRPP) to anthranilate to yield N-(5'-phosphoribosyl)-anthranilate (PRA). This is Anthranilate phosphoribosyltransferase from Mycobacterium marinum (strain ATCC BAA-535 / M).